Consider the following 63-residue polypeptide: Large ribosomal subunit protein bL35 (63 aa).

Residues 26–50 (GSGMRHNLEHKSARKRRALKRDDVL) form a disordered region.

It belongs to the bacterial ribosomal protein bL35 family.

The sequence is that of Large ribosomal subunit protein bL35 from Bifidobacterium animalis subsp. lactis (strain AD011).